A 91-amino-acid polypeptide reads, in one-letter code: Peptide Ctry2146 (91 aa).

A signal peptide spans 1–23 (MKTQTLLVTFLVVLLMVATQTEA). Residue Leu-33 is modified to Leucine amide. Residues 37–91 (GLLDGLLGKRGLLFGKRGPLFGKRALTNQDFLDFAYDPSLSAADMDALEMLFEDY) constitute a propeptide that is removed on maturation.

It belongs to the non-disulfide-bridged peptide (NDBP) superfamily. Short antimicrobial peptide (group 4) family. As to expression, expressed by the venom gland.

The protein localises to the secreted. It localises to the target cell membrane. Functionally, antimicrobial peptide. The sequence is that of Peptide Ctry2146 from Chaerilus tryznai (Scorpion).